Consider the following 594-residue polypeptide: Aspartate--tRNA(Asp/Asn) ligase (594 aa).

Residue Glu-175 participates in L-aspartate binding. Residues Gln-199–Lys-202 are aspartate. Arg-221 lines the L-aspartate pocket. ATP is bound by residues Arg-221 to Glu-223 and Gln-230. His-446 serves as a coordination point for L-aspartate. Glu-491 is a binding site for ATP. Arg-498 serves as a coordination point for L-aspartate. Position 543–546 (Gly-543–Arg-546) interacts with ATP.

The protein belongs to the class-II aminoacyl-tRNA synthetase family. Type 1 subfamily. In terms of assembly, homodimer.

It localises to the cytoplasm. It catalyses the reaction tRNA(Asx) + L-aspartate + ATP = L-aspartyl-tRNA(Asx) + AMP + diphosphate. In terms of biological role, aspartyl-tRNA synthetase with relaxed tRNA specificity since it is able to aspartylate not only its cognate tRNA(Asp) but also tRNA(Asn). Reaction proceeds in two steps: L-aspartate is first activated by ATP to form Asp-AMP and then transferred to the acceptor end of tRNA(Asp/Asn). This chain is Aspartate--tRNA(Asp/Asn) ligase, found in Thermodesulfovibrio yellowstonii (strain ATCC 51303 / DSM 11347 / YP87).